We begin with the raw amino-acid sequence, 172 residues long: Capsid protein (172 aa).

The interval 1–26 (MASKWNWSGTKGRRTPRRPYGRPYKS) is disordered. The segment covering 11 to 20 (KGRRTPRRPY) has biased composition (basic residues).

The protein belongs to the nanoviridae capsid protein family.

Its subcellular location is the virion. In Faba bean necrotic yellows virus (isolate Syrian SV292-88) (FBNYV), this protein is Capsid protein (DNA-S).